The sequence spans 159 residues: Transcriptional repressor NrdR (159 aa).

A zinc finger spans residues cysteine 3–cysteine 34. The 91-residue stretch at proline 49–glutamate 139 folds into the ATP-cone domain.

It belongs to the NrdR family. It depends on Zn(2+) as a cofactor.

In terms of biological role, negatively regulates transcription of bacterial ribonucleotide reductase nrd genes and operons by binding to NrdR-boxes. This is Transcriptional repressor NrdR from Burkholderia thailandensis (strain ATCC 700388 / DSM 13276 / CCUG 48851 / CIP 106301 / E264).